The chain runs to 209 residues: Ribosomal RNA large subunit methyltransferase E (209 aa).

Residues Gly-63, Trp-65, Asp-83, Asp-99, and Asp-124 each coordinate S-adenosyl-L-methionine. Lys-164 functions as the Proton acceptor in the catalytic mechanism.

It belongs to the class I-like SAM-binding methyltransferase superfamily. RNA methyltransferase RlmE family.

It localises to the cytoplasm. It catalyses the reaction uridine(2552) in 23S rRNA + S-adenosyl-L-methionine = 2'-O-methyluridine(2552) in 23S rRNA + S-adenosyl-L-homocysteine + H(+). Specifically methylates the uridine in position 2552 of 23S rRNA at the 2'-O position of the ribose in the fully assembled 50S ribosomal subunit. The protein is Ribosomal RNA large subunit methyltransferase E of Alkalilimnicola ehrlichii (strain ATCC BAA-1101 / DSM 17681 / MLHE-1).